We begin with the raw amino-acid sequence, 126 residues long: NADH-quinone oxidoreductase subunit A (126 aa).

Helical transmembrane passes span 11-31, 64-84, and 98-118; these read IAIQ…SSWL, FLVA…YPWA, and EGFV…IYVI.

Belongs to the complex I subunit 3 family. NDH-1 is composed of 14 different subunits. Subunits NuoA, H, J, K, L, M, N constitute the membrane sector of the complex.

The protein resides in the cell inner membrane. The catalysed reaction is a quinone + NADH + 5 H(+)(in) = a quinol + NAD(+) + 4 H(+)(out). In terms of biological role, NDH-1 shuttles electrons from NADH, via FMN and iron-sulfur (Fe-S) centers, to quinones in the respiratory chain. The immediate electron acceptor for the enzyme in this species is believed to be a menaquinone. Couples the redox reaction to proton translocation (for every two electrons transferred, four hydrogen ions are translocated across the cytoplasmic membrane), and thus conserves the redox energy in a proton gradient. The chain is NADH-quinone oxidoreductase subunit A from Cytophaga hutchinsonii (strain ATCC 33406 / DSM 1761 / CIP 103989 / NBRC 15051 / NCIMB 9469 / D465).